The sequence spans 542 residues: Hydroxylamine reductase (542 aa).

The [4Fe-4S] cluster site is built by Cys5, Cys8, Cys17, and Cys23. Positions 237, 261, 305, 397, 425, 450, 485, and 487 each coordinate hybrid [4Fe-2O-2S] cluster. Position 397 is a cysteine persulfide (Cys397).

The protein belongs to the HCP family. It depends on [4Fe-4S] cluster as a cofactor. Requires hybrid [4Fe-2O-2S] cluster as cofactor.

The protein localises to the cytoplasm. It carries out the reaction A + NH4(+) + H2O = hydroxylamine + AH2 + H(+). Catalyzes the reduction of hydroxylamine to form NH(3) and H(2)O. The polypeptide is Hydroxylamine reductase (Acetivibrio thermocellus (strain ATCC 27405 / DSM 1237 / JCM 9322 / NBRC 103400 / NCIMB 10682 / NRRL B-4536 / VPI 7372) (Clostridium thermocellum)).